The chain runs to 263 residues: UPF0758 protein NGR_c13970 (263 aa).

The MPN domain occupies 141-263 (VLSSWSAVID…HVSMKGLRLF (123 aa)). Zn(2+) contacts are provided by H212, H214, and D225. The JAMM motif motif lies at 212–225 (HNHPSGDPTPSRAD).

The protein belongs to the UPF0758 family.

The protein is UPF0758 protein NGR_c13970 of Sinorhizobium fredii (strain NBRC 101917 / NGR234).